Consider the following 273-residue polypeptide: Serine acetyltransferase (273 aa).

This sequence belongs to the transferase hexapeptide repeat family. In terms of assembly, part of the cysteine synthase complex formed at a ratio of 1 copy of this protein and 2 copies of O-acetylserine sulfhydrylase (cysK). The complex reversibly dissociates in the presence of O-acetyl-L-serine in the absence of hydrogen sulfide.

It localises to the cytoplasm. The catalysed reaction is L-serine + acetyl-CoA = O-acetyl-L-serine + CoA. It participates in amino-acid biosynthesis; L-cysteine biosynthesis; L-cysteine from L-serine: step 1/2. Its activity is regulated as follows. Sensitive to feedback inhibition by L-cysteine. The polypeptide is Serine acetyltransferase (cysE) (Salmonella typhimurium (strain LT2 / SGSC1412 / ATCC 700720)).